The primary structure comprises 118 residues: Hydrogenase maturation factor HypA (118 aa).

Histidine 2 is a Ni(2+) binding site. Residues cysteine 73, cysteine 76, cysteine 89, and cysteine 92 each contribute to the Zn(2+) site.

It belongs to the HypA/HybF family.

Its function is as follows. Involved in the maturation of [NiFe] hydrogenases. Required for nickel insertion into the metal center of the hydrogenase. This chain is Hydrogenase maturation factor HypA, found in Shewanella sp. (strain MR-7).